The primary structure comprises 145 residues: D-aminoacyl-tRNA deacylase (145 aa).

Positions 137-138 (GP) match the Gly-cisPro motif, important for rejection of L-amino acids motif.

It belongs to the DTD family. In terms of assembly, homodimer.

Its subcellular location is the cytoplasm. The enzyme catalyses glycyl-tRNA(Ala) + H2O = tRNA(Ala) + glycine + H(+). It carries out the reaction a D-aminoacyl-tRNA + H2O = a tRNA + a D-alpha-amino acid + H(+). Functionally, an aminoacyl-tRNA editing enzyme that deacylates mischarged D-aminoacyl-tRNAs. Also deacylates mischarged glycyl-tRNA(Ala), protecting cells against glycine mischarging by AlaRS. Acts via tRNA-based rather than protein-based catalysis; rejects L-amino acids rather than detecting D-amino acids in the active site. By recycling D-aminoacyl-tRNA to D-amino acids and free tRNA molecules, this enzyme counteracts the toxicity associated with the formation of D-aminoacyl-tRNA entities in vivo and helps enforce protein L-homochirality. The sequence is that of D-aminoacyl-tRNA deacylase from Deinococcus radiodurans (strain ATCC 13939 / DSM 20539 / JCM 16871 / CCUG 27074 / LMG 4051 / NBRC 15346 / NCIMB 9279 / VKM B-1422 / R1).